We begin with the raw amino-acid sequence, 846 residues long: MPVKFHTKTLESVIDPVAQQVGQLVLFHEQAESGLLKEDLTPLVQGVGIAVTNLVQVAASMVETSNDEDFKAELPPSMQEVQQAAVFLSDAARLLKADQGSPEGKRKLLDGARGVINGMSDLLMCADRSEVRKMVKVCRSVQEYLDVAKVIDVEADLATFLQNLTPGMTSMMKVVEQRHPELTNLAHAQMLKSELGTVREQIPILISSIRVCCLVIVKDGSSGMKDAAFGRDYVIQKLFIAIEEIIRVLQLTTTFEEEEVGGAGAASAASLAHMFHQAQDALASGDISRSTLDAVRKCISEGRRVAALAATDETRAKLLAAADELDQILKELEELQAKGLGDSRQARALAHAAAVKLQELEQEIRKALAERVATDFVNVGGPIKALEDAALASPSDPNRQANFAQKAKEFEAHTARLADTAELVASSGGCSDAVAAELRKEAAKLRDISTAVVPAARVVLENPGNQAAKDYLRTVKEKWLEAAESMGRSVDGVIDSLEFMKVSEARIQADVKEAKRIALAEEDSMKLIAKASSVARQANRVIQVAKVEADNSENPEFVAKLSSASESLAKSISPMVIEAKAVVTSPQNKDIQRKFCSSADKVVEGVAAVRSVIEDNWVPPRPPLPELEEEEEPPELPPPPEDPASLLPAEMQEAEEMLRAPLPPKDQNPIHHAAASVFREADQWDEKGNDLISLVKQMARKMAMMSKYTRGESGEVRSKADLIRMAKEIALNAQELLKLARQIANACMDKRAKTNLLQLLDRIPTISTQLKILATVKATSMGGGDARADADATDMLVGNAENLMRTVKDVIRASEAACIRLRPDSPIASILWRKKGGQGRRISVSY.

Residues 1–257 are interaction with TLN; sequence MPVKFHTKTL…VLQLTTTFEE (257 aa). A coiled-coil region spans residues 315 to 370; the sequence is RAKLLAAADELDQILKELEELQAKGLGDSRQARALAHAAAVKLQELEQEIRKALAE. A disordered region spans residues 617–646; sequence WVPPRPPLPELEEEEEPPELPPPPEDPASL.

It belongs to the vinculin/alpha-catenin family. Monomer. Interacts with TLN (talin); the interaction facilitates VIN1 binding to F-actin. Expressed in epithelial tissues, specifically the pinacoderm (outer epithelium) and choanoderm (feeding epithelium) (at protein level). Also detected in migratory cells of the mesohyl (at protein level).

It is found in the cytoplasm. It localises to the cell cortex. The protein resides in the cell projection. The protein localises to the filopodium. Its subcellular location is the cytoskeleton. Functionally, actin filament (F-actin)-binding protein which may play a role in cell-cell adhesion. The sequence is that of Vinculin from Oscarella pearsei (Sponge).